Here is a 476-residue protein sequence, read N- to C-terminus: 3-isopropylmalate dehydratase large subunit (476 aa).

[4Fe-4S] cluster contacts are provided by cysteine 353, cysteine 413, and cysteine 416.

This sequence belongs to the aconitase/IPM isomerase family. LeuC type 1 subfamily. In terms of assembly, heterodimer of LeuC and LeuD. [4Fe-4S] cluster serves as cofactor.

It catalyses the reaction (2R,3S)-3-isopropylmalate = (2S)-2-isopropylmalate. It participates in amino-acid biosynthesis; L-leucine biosynthesis; L-leucine from 3-methyl-2-oxobutanoate: step 2/4. Functionally, catalyzes the isomerization between 2-isopropylmalate and 3-isopropylmalate, via the formation of 2-isopropylmaleate. This is 3-isopropylmalate dehydratase large subunit from Photobacterium profundum (strain SS9).